The primary structure comprises 954 residues: Valine--tRNA ligase (954 aa).

The 'HIGH' region motif lies at 48 to 58; it reads PNVTGSLHMGH. Residues 560 to 564 carry the 'KMSKS' region motif; sequence KMSKS. K563 is an ATP binding site. Residues 883–953 are a coiled coil; it reads AGFINKEAEL…LKQQYLAIEA (71 aa).

This sequence belongs to the class-I aminoacyl-tRNA synthetase family. ValS type 1 subfamily. In terms of assembly, monomer.

The protein resides in the cytoplasm. The catalysed reaction is tRNA(Val) + L-valine + ATP = L-valyl-tRNA(Val) + AMP + diphosphate. Catalyzes the attachment of valine to tRNA(Val). As ValRS can inadvertently accommodate and process structurally similar amino acids such as threonine, to avoid such errors, it has a 'posttransfer' editing activity that hydrolyzes mischarged Thr-tRNA(Val) in a tRNA-dependent manner. This Pasteurella multocida (strain Pm70) protein is Valine--tRNA ligase.